The chain runs to 684 residues: Leishmanolysin-like peptidase (684 aa).

H257 contributes to the Zn(2+) binding site. E258 is a catalytic residue. Residues H261 and H364 each coordinate Zn(2+).

Belongs to the peptidase M8 family. Zn(2+) is required as a cofactor.

It is found in the cytoplasm. Functionally, essential for the coordination of mitotic progression, and also plays a role in cell migration. The sequence is that of Leishmanolysin-like peptidase from Drosophila pseudoobscura pseudoobscura (Fruit fly).